A 436-amino-acid chain; its full sequence is Hydrogenobyrinate a,c-diamide synthase (436 aa).

Positions 244–435 (RIAVARDDAF…MHVIDFSGEA (192 aa)) constitute a GATase cobBQ-type domain. Residue Cys327 is the Nucleophile of the active site.

The protein belongs to the CobB/CbiA family. The cofactor is Mg(2+).

It catalyses the reaction hydrogenobyrinate + 2 L-glutamine + 2 ATP + 2 H2O = hydrogenobyrinate a,c-diamide + 2 L-glutamate + 2 ADP + 2 phosphate + 2 H(+). It participates in cofactor biosynthesis; adenosylcobalamin biosynthesis; cob(II)yrinate a,c-diamide from precorrin-2 (aerobic route): step 9/10. Catalyzes the ATP-dependent amidation of the two carboxylate groups at positions a and c of hydrogenobyrinate, using either L-glutamine or ammonia as the nitrogen source. This chain is Hydrogenobyrinate a,c-diamide synthase, found in Brucella ovis (strain ATCC 25840 / 63/290 / NCTC 10512).